A 207-amino-acid polypeptide reads, in one-letter code: Serotype 2 fimbrial subunit (207 aa).

Residues M1–A26 form the signal peptide. Residues C42 and C85 are joined by a disulfide bond.

This sequence belongs to the fimbrial protein family.

It is found in the fimbrium. Its function is as follows. Bordetella pertussis is the causative agent of whooping cough. An essential step in the disease process is the attachment of the bacteria to the ciliated epithelium of the respiratory tract, enabling the organism to resist normal host-clearance mechanisms. It is unclear which bacterial cell surface component are responsible for adherence but the fimbriae of B.pertussis are prime candidates for being involved in this process. This is Serotype 2 fimbrial subunit (fim2) from Bordetella pertussis (strain Tohama I / ATCC BAA-589 / NCTC 13251).